The primary structure comprises 447 residues: UPF0210 protein lp_2507 (447 aa).

This sequence belongs to the UPF0210 family. As to quaternary structure, homodimer.

The polypeptide is UPF0210 protein lp_2507 (Lactiplantibacillus plantarum (strain ATCC BAA-793 / NCIMB 8826 / WCFS1) (Lactobacillus plantarum)).